Consider the following 177-residue polypeptide: Large ribosomal subunit protein uL6 (177 aa).

Belongs to the universal ribosomal protein uL6 family. Part of the 50S ribosomal subunit.

Its function is as follows. This protein binds to the 23S rRNA, and is important in its secondary structure. It is located near the subunit interface in the base of the L7/L12 stalk, and near the tRNA binding site of the peptidyltransferase center. This chain is Large ribosomal subunit protein uL6, found in Teredinibacter turnerae (strain ATCC 39867 / T7901).